Reading from the N-terminus, the 489-residue chain is MPSESSVKATAAPPPFPLPPDGGWGWVVVCASFISIGFSYAFPKAVTVFFNDIKDIFKTTSSQIAWISSIMLAVMYAGGPISSVLVNNYGSRPVVIVGGLLCCTGMILASFSSSVIELYLTVGFIGGLGLAFNLQPALTIIGKYFYRKRPLANGFAMAGSPVFLSTLAPFNQFLFNSYGWKGSFLILGAIFLHSCVAGCLMRPVGPSPRAAKSKSKVGSRQDSSTKRLSKVSTAEKINRFLDFGLFTHRGFLIYLSGNVVLFLGMFAPIIFLAPYAKDKGVDDYNSAFLLSVMAFTDMFARPSVGLIANTSLIRPRIQYLFSVAIMFTGICHLLCPLAHSYTALVVYVIFFGIGFGSISSLLFECLMDQVGASRFSSAVGLVTIVECCPVLFGPPLAGKLLDITGQYKYLYIASGIVVLSSGIYLLICNAINYRLLEKERKREKARRKKSASQASKEMEALSRSKQDDVTVKVSNTHNPPSDRDKESSI.

Residues 1–21 (MPSESSVKATAAPPPFPLPPD) are Cytoplasmic-facing. Residues 22–42 (GGWGWVVVCASFISIGFSYAF) form a helical membrane-spanning segment. Over 43 to 65 (PKAVTVFFNDIKDIFKTTSSQIA) the chain is Extracellular. The chain crosses the membrane as a helical span at residues 66–86 (WISSIMLAVMYAGGPISSVLV). Over 87-95 (NNYGSRPVV) the chain is Cytoplasmic. A helical transmembrane segment spans residues 96 to 116 (IVGGLLCCTGMILASFSSSVI). Over 117–121 (ELYLT) the chain is Extracellular. The helical transmembrane segment at 122–142 (VGFIGGLGLAFNLQPALTIIG) threads the bilayer. The Cytoplasmic segment spans residues 143–154 (KYFYRKRPLANG). The chain crosses the membrane as a helical span at residues 155 to 175 (FAMAGSPVFLSTLAPFNQFLF). At 176-179 (NSYG) the chain is on the extracellular side. A helical membrane pass occupies residues 180–200 (WKGSFLILGAIFLHSCVAGCL). At 201–250 (MRPVGPSPRAAKSKSKVGSRQDSSTKRLSKVSTAEKINRFLDFGLFTHRG) the chain is on the cytoplasmic side. The segment at 206–227 (PSPRAAKSKSKVGSRQDSSTKR) is disordered. A helical transmembrane segment spans residues 251-271 (FLIYLSGNVVLFLGMFAPIIF). The Extracellular segment spans residues 272-286 (LAPYAKDKGVDDYNS). A helical membrane pass occupies residues 287 to 307 (AFLLSVMAFTDMFARPSVGLI). At 308–316 (ANTSLIRPR) the chain is on the cytoplasmic side. Residues 317–337 (IQYLFSVAIMFTGICHLLCPL) traverse the membrane as a helical segment. The Extracellular segment spans residues 338–342 (AHSYT). A helical transmembrane segment spans residues 343–363 (ALVVYVIFFGIGFGSISSLLF). At 364–377 (ECLMDQVGASRFSS) the chain is on the cytoplasmic side. The chain crosses the membrane as a helical span at residues 378–398 (AVGLVTIVECCPVLFGPPLAG). At 399-410 (KLLDITGQYKYL) the chain is on the extracellular side. A helical membrane pass occupies residues 411–431 (YIASGIVVLSSGIYLLICNAI). Residues 432–489 (NYRLLEKERKREKARRKKSASQASKEMEALSRSKQDDVTVKVSNTHNPPSDRDKESSI) lie on the Cytoplasmic side of the membrane. Residues 441–489 (KREKARRKKSASQASKEMEALSRSKQDDVTVKVSNTHNPPSDRDKESSI) form a disordered region. 2 stretches are compositionally biased toward basic and acidic residues: residues 456–470 (KEME…DDVT) and 480–489 (PSDRDKESSI).

This sequence belongs to the major facilitator superfamily. Monocarboxylate porter (TC 2.A.1.13) family. As to quaternary structure, homodimer. Interacts with GRID2IP. Interacts with EMB; interaction mediates SLC16A7 targeting to the plasma membrane. Interacts with isoform 2 of BSG. As to expression, detected in brain and kidney (at protein level).

The protein resides in the cell membrane. It localises to the basolateral cell membrane. It is found in the cytoplasm. The enzyme catalyses 3-methyl-2-oxobutanoate(out) + H(+)(out) = 3-methyl-2-oxobutanoate(in) + H(+)(in). The catalysed reaction is (S)-lactate(in) + H(+)(in) = (S)-lactate(out) + H(+)(out). It catalyses the reaction acetoacetate(out) + H(+)(out) = acetoacetate(in) + H(+)(in). It carries out the reaction (R)-3-hydroxybutanoate(out) + H(+)(out) = (R)-3-hydroxybutanoate(in) + H(+)(in). The enzyme catalyses 4-methyl-2-oxopentanoate(out) + H(+)(out) = 4-methyl-2-oxopentanoate(in) + H(+)(in). The catalysed reaction is pyruvate(out) + H(+)(out) = pyruvate(in) + H(+)(in). It catalyses the reaction (S)-3-hydroxybutanoate(out) + H(+)(out) = (S)-3-hydroxybutanoate(in) + H(+)(in). With respect to regulation, transport activity exhibits steep dependence on substrate concentration. Substrate concentration sensitivity of SLC16A7 arises from the strong inter-subunit cooperativity of the SLC16A7 dimer during transport. Inhibited by AR-C155858. Proton-coupled monocarboxylate symporter. Catalyzes the rapid transport across the plasma membrane of monocarboxylates such as L-lactate, pyruvate and ketone bodies, acetoacetate, beta-hydroxybutyrate and acetate. Dimerization is functionally required and both subunits work cooperatively in transporting substrate. The sequence is that of Monocarboxylate transporter 2 (Slc16a7) from Rattus norvegicus (Rat).